A 371-amino-acid polypeptide reads, in one-letter code: 2-aminoethylphosphonate--pyruvate transaminase (371 aa).

N6-(pyridoxal phosphate)lysine is present on Lys-195.

This sequence belongs to the class-V pyridoxal-phosphate-dependent aminotransferase family. PhnW subfamily. In terms of assembly, homodimer. The cofactor is pyridoxal 5'-phosphate.

It carries out the reaction (2-aminoethyl)phosphonate + pyruvate = phosphonoacetaldehyde + L-alanine. Its function is as follows. Involved in phosphonate degradation. This Pseudomonas aeruginosa (strain UCBPP-PA14) protein is 2-aminoethylphosphonate--pyruvate transaminase.